A 385-amino-acid polypeptide reads, in one-letter code: Outer membrane protein assembly factor BamB (385 aa).

The signal sequence occupies residues 1-20 (MRKVLKKAALCTFGFSMLFG). Residue C21 is the site of N-palmitoyl cysteine attachment. C21 carries the S-diacylglycerol cysteine lipid modification.

It belongs to the BamB family. Part of the Bam complex.

The protein resides in the cell outer membrane. In terms of biological role, part of the outer membrane protein assembly complex, which is involved in assembly and insertion of beta-barrel proteins into the outer membrane. This Aliivibrio fischeri (strain ATCC 700601 / ES114) (Vibrio fischeri) protein is Outer membrane protein assembly factor BamB.